Reading from the N-terminus, the 713-residue chain is BBSome complex assembly protein BBS10 (713 aa).

The protein belongs to the TCP-1 chaperonin family. In terms of assembly, component of a complex composed at least of MKKS, BBS10, BBS12, TCP1, CCT2, CCT3, CCT4, CCT5 and CCT8.

The protein localises to the cell projection. Its subcellular location is the cilium. Its function is as follows. Probable molecular chaperone that assists the folding of proteins upon ATP hydrolysis. Plays a role in the assembly of BBSome, a complex involved in ciliogenesis regulating transports vesicles to the cilia. Involved in adipogenic differentiation. The polypeptide is BBSome complex assembly protein BBS10 (Bbs10) (Mus musculus (Mouse)).